We begin with the raw amino-acid sequence, 140 residues long: MFCYFLSKSYDDCSRYYIISNMAFYFPVYDSDSPTTVHHDERKESWRSHGFIVCLHIRCCICCKYNSKIKKPSLNIALRIQSLKIIKILIFQFYSTKPLWDKNSPEYKQLRSEIEATKRDEEVKNGELIDPNVTTEDEKL.

A disordered region spans residues 121–140; that stretch reads EEVKNGELIDPNVTTEDEKL.

This is an uncharacterized protein from Schizosaccharomyces pombe (strain 972 / ATCC 24843) (Fission yeast).